The primary structure comprises 2104 residues: 5'-3' DNA helicase ZGRF1 (2104 aa).

Positions 335-345 are enriched in polar residues; that stretch reads SSPIHSSTVDG. The tract at residues 335 to 359 is disordered; the sequence is SSPIHSSTVDGNDTERKPKAQEDDV. The residue at position 336 (Ser-336) is a Phosphoserine. Basic and acidic residues predominate over residues 347–356; it reads DTERKPKAQE. A phosphoserine mark is found at Ser-793 and Ser-864. Zn(2+) contacts are provided by Cys-1349, His-1351, Cys-1374, and Cys-1382. Residues 1349 to 1391 form a GRF-type zinc finger; the sequence is CHHSQPAKLVMVKKEGPNKGRLFYTCDGPKADRCKFFKWLEDV. The tract at residues 2085 to 2104 is disordered; it reads VEEKQKKKSEKEKSKDKSHS.

In terms of assembly, interacts with DNA repair protein RAD51; the interaction promotes RAD51 strand exchange activity. Also interacts with DNA repair proteins EXO1 and BRCA1; the interactions are increased following DNA damage induction.

Its subcellular location is the nucleus. It carries out the reaction ATP + H2O = ADP + phosphate + H(+). The catalysed reaction is Couples ATP hydrolysis with the unwinding of duplex DNA at the replication fork by translocating in the 5'-3' direction. This creates two antiparallel DNA single strands (ssDNA). The leading ssDNA polymer is the template for DNA polymerase III holoenzyme which synthesizes a continuous strand.. Functionally, 5'-3' DNA helicase which is recruited to sites of DNA damage and promotes repair of replication-blocking DNA lesions through stimulation of homologous recombination (HR). Promotes HR by directly stimulating RAD51-mediated strand exchange activity. Not required to load RAD51 at sites of DNA damage but promotes recombinational repair after RAD51 recruitment. Also promotes HR by positively regulating EXO1-mediated DNA end resection of double-strand breaks. Required for recruitment of replication protein RPA2 to DNA damage sites. Promotes the initiation of the G2/M checkpoint but not its maintenance. Catalyzes Holliday junction branch migration and dissociation of D-loops and DNA flaps. The polypeptide is 5'-3' DNA helicase ZGRF1 (ZGRF1) (Homo sapiens (Human)).